The following is a 494-amino-acid chain: Protein DETOXIFICATION 22 (494 aa).

Helical transmembrane passes span 40-60 (LWVV…VSLV), 78-98 (ITFT…ASAL), 123-143 (IVLT…GPIL), 159-179 (IALW…CQIF), 188-208 (IIAY…WLLV), 217-237 (GAMT…LLYV), 268-288 (GGMV…TGNL), 299-319 (AICI…LAAV), 340-360 (IVAV…FLFL), 384-404 (LLAF…VAVG), 416-436 (LACY…VVGL), and 441-461 (VWIG…IMTL).

The protein belongs to the multi antimicrobial extrusion (MATE) (TC 2.A.66.1) family.

The protein resides in the membrane. In Arabidopsis thaliana (Mouse-ear cress), this protein is Protein DETOXIFICATION 22.